Reading from the N-terminus, the 101-residue chain is Feather keratin Cos2-3 (101 aa).

N-acetylserine is present on Ser2.

The protein belongs to the avian keratin family. The avian keratins (F-ker, S-ker, C-ker and B-ker) are a complex mixture of very similar polypeptides.

This is Feather keratin Cos2-3 from Columba livia (Rock dove).